The primary structure comprises 264 residues: Movement protein (264 aa).

Residues 210 to 219 show a composition bias toward basic residues; it reads FRTKPSKRGP. The disordered stretch occupies residues 210–264; sequence FRTKPSKRGPKNNNNLGKGRSGGRPKPKSFDEVEKEFDNLIEDEAETSVADSDSY. Over residues 237–247 the composition is skewed to basic and acidic residues; it reads KSFDEVEKEFD.

Belongs to the tobamovirus movement protein family. Binds to host RBCS at the plasmodesmata; this interaction seems required for viral systemic movement. In resistant plants, interacts with host MBP2C at host microtubules; this interaction prevents virus cell to cell movement. In resistant plants, interacts with host resistance (R) protein (e.g. tomato ToMV resistance protein TM-2(2), AC Q71BG9) at the host plasma membrane; this interaction triggers host defense responses leading to programmed cell death.

It localises to the host cytoplasm. The protein localises to the host cytoskeleton. Its subcellular location is the host cell junction. It is found in the host plasmodesma. Functionally, transports viral genome to neighboring plant cells directly through plasmosdesmata, without any budding. The movement protein allows efficient cell to cell propagation, by bypassing the host cell wall barrier. Forms a ribonucleoprotein complex with viral RNA. Binds microtubules and modulates microtubule stability. Can bind double-stranded DNA. Triggers host hypersensitive defense reaction in incompatible plants harboring resistance (R) proteins. This chain is Movement protein (MP), found in Tomato mosaic virus (strain LII) (ToMV).